Here is a 156-residue protein sequence, read N- to C-terminus: Deoxyuridine 5'-triphosphate nucleotidohydrolase (156 aa).

Residues 76 to 78 (RSG), Asn-89, 93 to 95 (TVD), and Lys-103 each bind substrate.

It belongs to the dUTPase family. Requires Mg(2+) as cofactor.

The catalysed reaction is dUTP + H2O = dUMP + diphosphate + H(+). Its pathway is pyrimidine metabolism; dUMP biosynthesis; dUMP from dCTP (dUTP route): step 2/2. Its function is as follows. This enzyme is involved in nucleotide metabolism: it produces dUMP, the immediate precursor of thymidine nucleotides and it decreases the intracellular concentration of dUTP so that uracil cannot be incorporated into DNA. The polypeptide is Deoxyuridine 5'-triphosphate nucleotidohydrolase (Agrobacterium fabrum (strain C58 / ATCC 33970) (Agrobacterium tumefaciens (strain C58))).